A 33-amino-acid polypeptide reads, in one-letter code: MDKKEYINRLNEQKPLQEMXSRDRYLXNFHLIP.

15 to 18 serves as a coordination point for substrate; it reads PLQE. Residue glutamate 18 is part of the active site.

The protein belongs to the glycosyl hydrolase 32 family.

It catalyses the reaction Hydrolysis of terminal non-reducing beta-D-fructofuranoside residues in beta-D-fructofuranosides.. It participates in glycan biosynthesis; sucrose metabolism. This chain is Sucrose-6-phosphate hydrolase, found in Fusobacterium mortiferum.